Here is an 81-residue protein sequence, read N- to C-terminus: Putative CNGA1-overlapping antisense gene protein (81 aa).

As to expression, expressed in brain, notably in regions involved in long-term potentiation and long-term depression, such as hippocampal CA1 and CA3, dentate gyrus and cerebellar Purkinje layer.

In Homo sapiens (Human), this protein is Putative CNGA1-overlapping antisense gene protein.